We begin with the raw amino-acid sequence, 295 residues long: MKAVIPVAGLGTRMLPATKAIPKEMLTLVDKPLIQYVVNECVAAGIKEIVLVTHSSKNAIENHFDTSFELETMLEKRVKRQLLEEVRSICPKNVTIMHVRQGNAKGLGHAVLCGRPLVGNESFAVMLPDVLLAEFSADQKKENLAAMIQRFNETGASQIMVTPVPQENVSSYGVADCGGIELNGGESAKINSIVEKPSIEDAPSNLAVVGRYVFSAAIWDLLEKTPIGVGDEIQLTDAIDMLIEKETVEAFHMTGETFDCGDKIGYMEAFVEYGIRHEKLGKEFKSFIKNLAKTL.

The protein belongs to the UDPGP type 2 family.

The catalysed reaction is alpha-D-glucose 1-phosphate + UTP + H(+) = UDP-alpha-D-glucose + diphosphate. In terms of biological role, may play a role in stationary phase survival. This Haemophilus influenzae (strain ATCC 51907 / DSM 11121 / KW20 / Rd) protein is UTP--glucose-1-phosphate uridylyltransferase (galU).